The following is a 283-amino-acid chain: Xyloglucan endotransglucosylase/hydrolase 2 (283 aa).

The N-terminal stretch at 1 to 30 (MAPSSAHNNGFYVLMLVGIVVSTMVATCAG) is a signal peptide. The GH16 domain occupies 31–220 (SFYQDFDLTW…WSKAPFTAYY (190 aa)). The Nucleophile role is filled by E106. E110 serves as the catalytic Proton donor. E110 contributes to the xyloglucan binding site. N114 carries N-linked (GlcNAc...) asparagine glycosylation. Residues 123–125 (HTN), 133–135 (NRE), 199–200 (DW), G204, and R272 each bind xyloglucan. Cysteines 267 and 281 form a disulfide.

Belongs to the glycosyl hydrolase 16 family. Contains at least one intrachain disulfide bond essential for its enzymatic activity. In terms of processing, N-glycosylated; not essential for its enzymatic activity.

The protein localises to the secreted. Its subcellular location is the cell wall. It is found in the extracellular space. The protein resides in the apoplast. The enzyme catalyses breaks a beta-(1-&gt;4) bond in the backbone of a xyloglucan and transfers the xyloglucanyl segment on to O-4 of the non-reducing terminal glucose residue of an acceptor, which can be a xyloglucan or an oligosaccharide of xyloglucan.. Functionally, catalyzes xyloglucan endohydrolysis (XEH) and/or endotransglycosylation (XET). Cleaves and religates xyloglucan polymers, an essential constituent of the primary cell wall, and thereby participates in cell wall construction of growing tissues. The chain is Xyloglucan endotransglucosylase/hydrolase 2 from Glycine max (Soybean).